The sequence spans 654 residues: Endoplasmic reticulum chaperone BiP (654 aa).

An N-terminal signal peptide occupies residues 1 to 18 (MKLSLVAAVLLLLCAARA). Positions 1-80 (MKLSLVAAVL…EGERLIGDAA (80 aa)) are required for interaction with ELAPOR1. 36–39 (GTTY) contacts ATP. Ser86 is subject to Phosphoserine. Lys96 is an ATP binding site. Position 125 is an N6-acetyllysine (Lys125). The tract at residues 125–280 (KPYIQVDIGG…KKKTGKDVRK (156 aa)) is nucleotide-binding (NBD). Tyr160 carries the post-translational modification 3'-nitrotyrosine. N6-acetyllysine is present on Lys213. ATP is bound at residue 227–229 (GGT). Lys271 is subject to N6-acetyllysine. 293 to 300 (EKAKRALS) is an ATP binding site. N6-acetyllysine is present on Lys326. Lys352 participates in a covalent cross-link: Glycyl lysine isopeptide (Lys-Gly) (interchain with G-Cter in SUMO2). Lys353 is subject to N6-acetyllysine; alternate. Lys353 participates in a covalent cross-link: Glycyl lysine isopeptide (Lys-Gly) (interchain with G-Cter in SUMO1); alternate. 364–367 (GSTR) serves as a coordination point for ATP. The tract at residues 409-419 (QDTGDLVLLDV) is interdomain linker. A substrate-binding (SBD) region spans residues 420-500 (CPLTLGIETV…PRGVPQIEVT (81 aa)). N6-succinyllysine is present on Lys447. Arg492 carries the omega-N-methylarginine modification. Thr518 bears the O-AMP-threonine; alternate mark. Thr518 bears the Phosphothreonine; alternate mark. Residue Lys585 is modified to N6,N6,N6-trimethyllysine; by METTL21A; in vitro. Lys585 is subject to N6,N6-dimethyllysine; alternate. The residue at position 585 (Lys585) is an N6-methyllysine; alternate. Residue Lys591 is modified to N6-methyllysine. Residues 632–654 (SKLYGSAGPPPTGEEDTSERDEL) are disordered. 2 positions are modified to phosphothreonine: Thr643 and Thr648. Over residues 644–654 (GEEDTSERDEL) the composition is skewed to acidic residues. Ser649 is modified (phosphoserine). A Prevents secretion from ER motif is present at residues 651 to 654 (RDEL).

This sequence belongs to the heat shock protein 70 family. In terms of assembly, monomer and homooligomer; homooligomerization via the interdomain linker inactivates the chaperone activity and acts as a storage of HSPA5/BiP molecules. Interacts with DNAJC1 (via J domain). Component of an EIF2 complex at least composed of CELF1/CUGBP1, CALR, CALR3, EIF2S1, EIF2S2, HSP90B1 and HSPA5. Part of a large chaperone multiprotein complex comprising DNAJB11, HSP90B1, HSPA5, HYOU, PDIA2, PDIA4, PDIA6, PPIB, SDF2L1, UGGT1 and very small amounts of ERP29, but not, or at very low levels, CALR nor CANX. Interacts with TMEM132A and TRIM21. May form a complex with ERLEC1, OS9, SEL1L and SYVN1. Interacts with DNAJC10. Interacts with DNAJB9/ERdj4; leading to recruit HSPA5/BiP to ERN1/IRE1. Interacts with ERN1/IRE1 (via luminal domain); the interaction takes place following interaction with DNAJB9/ERdj4 and leads to inactivate ERN1/IRE1, the interaction also competitively inhibits ERN1 interaction with MANF. Interacts directly with MANF (via SAP domain); the interaction inhibits ATP binding to HSPA5/BiP and subsequent nucleotide exchange. Interacts with EIF2AK3/PERK (via luminal domain); interaction leads to inactivate EIF2AK3/PERK. Interacts with MX1. Interacts with METTL23. Interacts with CEMIP; the interaction induces calcium leakage from the endoplasmic reticulum and cell migration. Interacts with PCSK4 form; the interaction takes place in the endoplasmic reticulum. Interacts with CIPC. Interacts with CCDC88B (via C-terminus); the interaction opposes ERN1-mediated JNK activation, protecting against apoptosis. Interacts with INPP5K; necessary for INPP5K localization at the endoplasmic reticulum. Interacts with MANF; the interaction is direct. Interacts with LOXL2; leading to activate the ERN1/IRE1-XBP1 pathway of the unfolded protein response. Interacts with CLU under stressed condition; interaction increases CLU protein stability; facilitates its retrotranslocation and redistribution to the mitochondria; cooperatively suppress stress-induced apoptosis by stabilizing mitochondrial membrane integrity. Interacts with CCDC47. Interacts with CLN3. Interacts with ELAPOR1; may regulate the function of HSPA5 in apoptosis and cell proliferation. Interacts with CASP7. Interacts with ILDR2; the interaction stabilizes ILDR2 expression. Interacts with ADAM7. In unstressed cells, AMPylation at Thr-518 by FICD inactivates the chaperome activity: AMPylated form is locked in a relatively inert state and only weakly stimulated by J domain-containing proteins. In response to endoplasmic reticulum stress, de-AMPylation by the same protein, FICD, restores the chaperone activity.

The protein localises to the endoplasmic reticulum lumen. It localises to the melanosome. The protein resides in the cytoplasm. Its subcellular location is the cell surface. It catalyses the reaction ATP + H2O = ADP + phosphate + H(+). With respect to regulation, the chaperone activity is regulated by ATP-induced allosteric coupling of the nucleotide-binding (NBD) and substrate-binding (SBD) domains. In the ADP-bound and nucleotide-free (apo) states, the two domains have little interaction. In contrast, in the ATP-bound state the two domains are tightly coupled, which results in drastically accelerated kinetics in both binding and release of polypeptide substrates. J domain-containing co-chaperones (DNAJB9/ERdj4 or DNAJC10/ERdj5) stimulate the ATPase activity and are required for efficient substrate recognition by HSPA5/BiP. Homooligomerization inactivates participating HSPA5/BiP protomers and probably act as reservoirs to store HSPA5/BiP molecules when they are not needed by the cell. Its function is as follows. Endoplasmic reticulum chaperone that plays a key role in protein folding and quality control in the endoplasmic reticulum lumen. Involved in the correct folding of proteins and degradation of misfolded proteins via its interaction with DNAJC10/ERdj5, probably to facilitate the release of DNAJC10/ERdj5 from its substrate. Acts as a key repressor of the EIF2AK3/PERK and ERN1/IRE1-mediated unfolded protein response (UPR). In the unstressed endoplasmic reticulum, recruited by DNAJB9/ERdj4 to the luminal region of ERN1/IRE1, leading to disrupt the dimerization of ERN1/IRE1, thereby inactivating ERN1/IRE1. Also binds and inactivates EIF2AK3/PERK in unstressed cells. Accumulation of misfolded protein in the endoplasmic reticulum causes release of HSPA5/BiP from ERN1/IRE1 and EIF2AK3/PERK, allowing their homodimerization and subsequent activation. Plays an auxiliary role in post-translational transport of small presecretory proteins across endoplasmic reticulum (ER). May function as an allosteric modulator for SEC61 channel-forming translocon complex, likely cooperating with SEC62 to enable the productive insertion of these precursors into SEC61 channel. Appears to specifically regulate translocation of precursors having inhibitory residues in their mature region that weaken channel gating. May also play a role in apoptosis and cell proliferation. The sequence is that of Endoplasmic reticulum chaperone BiP from Ictidomys tridecemlineatus (Thirteen-lined ground squirrel).